A 155-amino-acid polypeptide reads, in one-letter code: Cardioactive peptide (155 aa).

The N-terminal stretch at 1–23 (MRTSMRISLRLLALLACAICSQA) is a signal peptide. A propeptide spanning residues 24-49 (SLERENNEGTNMANHKLSGVIQWKYE) is cleaved from the precursor. Cys-54 and Cys-60 form a disulfide bridge. Cys-60 carries the post-translational modification Cysteine amide. A propeptide spanning residues 64–155 (RTYPSYPPFS…MQQLEERESK (92 aa)) is cleaved from the precursor. Positions 135-155 (NKQKMLQNEKEMQQLEERESK) are disordered. Residues 141–155 (QNEKEMQQLEERESK) show a composition bias toward basic and acidic residues.

Central nervous system; most neurons exhibit coexpression with Burs.

The protein resides in the secreted. Cardioregulatory neurohormone that increases heart beat rate during adult wing inflation; has no effect on beat amplitude. The effect of CCAP is both ino- and chronotropic. The protein is Cardioactive peptide of Drosophila melanogaster (Fruit fly).